We begin with the raw amino-acid sequence, 85 residues long: Large ribosomal subunit protein bL27 (85 aa).

The tract at residues 1-22 (MAHKKGGGSSRNGRDSNAQRRG) is disordered.

The protein belongs to the bacterial ribosomal protein bL27 family.

The polypeptide is Large ribosomal subunit protein bL27 (Sorangium cellulosum (strain So ce56) (Polyangium cellulosum (strain So ce56))).